Here is a 134-residue protein sequence, read N- to C-terminus: Profilin-2 (134 aa).

Cys13 and Cys118 form a disulfide bridge. The Involved in PIP2 interaction motif lies at 84 to 100; it reads AVIRGKKGSGGITIKKT. At Thr114 the chain carries Phosphothreonine.

It belongs to the profilin family. In terms of processing, phosphorylated by MAP kinases.

It is found in the cytoplasm. It localises to the cytoskeleton. The sequence is that of Profilin-2 from Olea europaea (Common olive).